Reading from the N-terminus, the 488-residue chain is Glutamyl-tRNA(Gln) amidotransferase subunit A, mitochondrial (488 aa).

Catalysis depends on charge relay system residues lysine 62 and serine 140. Serine 164 serves as the catalytic Acyl-ester intermediate. The tract at residues glycine 205–arginine 228 is disordered. Residues threonine 218–serine 227 show a composition bias toward basic and acidic residues.

This sequence belongs to the amidase family. GatA subfamily. In terms of assembly, subunit of the heterotrimeric GatCAB amidotransferase (AdT) complex, composed of A, B and C subunits.

It localises to the mitochondrion. The catalysed reaction is L-glutamyl-tRNA(Gln) + L-glutamine + ATP + H2O = L-glutaminyl-tRNA(Gln) + L-glutamate + ADP + phosphate + H(+). Functionally, allows the formation of correctly charged Gln-tRNA(Gln) through the transamidation of misacylated Glu-tRNA(Gln) in the mitochondria. The reaction takes place in the presence of glutamine and ATP through an activated gamma-phospho-Glu-tRNA(Gln). The protein is Glutamyl-tRNA(Gln) amidotransferase subunit A, mitochondrial of Tuber melanosporum (strain Mel28) (Perigord black truffle).